The chain runs to 147 residues: MNPAHLLVLSAVCVSLLGAANIPPQHLDLYQFKEMIRYTIPCEKTWGEYADYGCYCGAGGSGTPIDALDRCCYVHDNCYGDAANIRDCDPKTQSYSYKLTKRTIICYGAAGTCARVVCDCDRTAALCFGNSEYIEGHKNIDTARFCQ.

The N-terminal stretch at 1–19 (MNPAHLLVLSAVCVSLLGA) is a signal peptide. The propeptide occupies 20–27 (ANIPPQHL). Intrachain disulfides connect Cys-54–Cys-146, Cys-56–Cys-72, Cys-71–Cys-127, Cys-78–Cys-120, Cys-88–Cys-113, and Cys-106–Cys-118. Residues Tyr-55, Gly-57, and Gly-59 each contribute to the Ca(2+) site. His-75 is a catalytic residue. Residue Asp-76 participates in Ca(2+) binding. The active site involves Asp-121.

Belongs to the phospholipase A2 family. Group I subfamily. D49 sub-subfamily. As to quaternary structure, heterodimer; disulfide-linked. The A chains have phospholipase A2 activity and the B chains show homology with the basic protease inhibitors. The cofactor is Ca(2+). In terms of tissue distribution, expressed by the venom gland.

It localises to the secreted. The enzyme catalyses a 1,2-diacyl-sn-glycero-3-phosphocholine + H2O = a 1-acyl-sn-glycero-3-phosphocholine + a fatty acid + H(+). Snake venom phospholipase A2 (PLA2) that inhibits neuromuscular transmission by blocking acetylcholine release from the nerve termini. PLA2 catalyzes the calcium-dependent hydrolysis of the 2-acyl groups in 3-sn-phosphoglycerides. This is Acidic phospholipase A2 beta-bungarotoxin A4 chain from Bungarus multicinctus (Many-banded krait).